The primary structure comprises 945 residues: Isoleucine--tRNA ligase (945 aa).

The 'HIGH' region signature appears at 67–77 (PYANGQIHLGH). Glu-573 is a binding site for L-isoleucyl-5'-AMP. The short motif at 614-618 (KMSKS) is the 'KMSKS' region element. Lys-617 contacts ATP. Zn(2+) is bound by residues Cys-908, Cys-911, Cys-928, and Cys-931.

The protein belongs to the class-I aminoacyl-tRNA synthetase family. IleS type 1 subfamily. Monomer. It depends on Zn(2+) as a cofactor.

It localises to the cytoplasm. The enzyme catalyses tRNA(Ile) + L-isoleucine + ATP = L-isoleucyl-tRNA(Ile) + AMP + diphosphate. In terms of biological role, catalyzes the attachment of isoleucine to tRNA(Ile). As IleRS can inadvertently accommodate and process structurally similar amino acids such as valine, to avoid such errors it has two additional distinct tRNA(Ile)-dependent editing activities. One activity is designated as 'pretransfer' editing and involves the hydrolysis of activated Val-AMP. The other activity is designated 'posttransfer' editing and involves deacylation of mischarged Val-tRNA(Ile). This chain is Isoleucine--tRNA ligase, found in Acinetobacter baylyi (strain ATCC 33305 / BD413 / ADP1).